A 1885-amino-acid chain; its full sequence is Chitin synthase 5 (1885 aa).

One can recognise a Myosin motor domain in the interval 1-789 (MATRGNVPAH…SIALTGSQAA (789 aa)). ATP is bound at residue 99–106 (GESGSGKT). Asparagine 219 and asparagine 429 each carry an N-linked (GlcNAc...) asparagine glycan. The tract at residues 601 to 649 (KPLRMPSVSRKKHDQLRRMASRRADRSPAPQEEEPLPGTEEAKVRRTKP) is disordered. The segment covering 609-621 (SRKKHDQLRRMAS) has biased composition (basic residues). Residues 666-690 (LDNITKSLTAPNVNNYFVFCLKPND) form an actin-binding region. N-linked (GlcNAc...) asparagine glycosylation occurs at asparagine 668. Residues 794 to 817 (GDIGSPSRPDTPGHNPFSDSKARL) form a disordered region. 2 consecutive transmembrane segments (helical) span residues 894–914 (WLAI…KWIG) and 929–949 (FAIN…IIVF). The Cytochrome b5 heme-binding domain maps to 957–1016 (QNVYSAAELSAHDGKGKHSAYVAIRGQVFDLGAFMPNHYPKIIPQSSLKKYAGVDATGLF). N-linked (GlcNAc...) asparagine glycosylation is found at asparagine 1043 and asparagine 1068. A helical membrane pass occupies residues 1205 to 1225 (ILLAVSILLCSVIGFKFFAAL). Residues asparagine 1462 and asparagine 1568 are each glycosylated (N-linked (GlcNAc...) asparagine). Helical transmembrane passes span 1599-1619 (LLST…IVLL), 1626-1646 (VPLT…IIFI), and 1653-1673 (MIGW…GLPL). Residues asparagine 1759 and asparagine 1790 are each glycosylated (N-linked (GlcNAc...) asparagine). The 56-residue stretch at 1827–1882 (LPTDDMLLNEIRDILRTADLMTVTKKGIKQELERRFNVNLDMKRAYIGSATEAILS) folds into the DEK-C domain.

This sequence in the N-terminal section; belongs to the TRAFAC class myosin-kinesin ATPase superfamily. Myosin family. In the C-terminal section; belongs to the chitin synthase family. Class V subfamily. Post-translationally, maximal activity requires trypsin activation, suggesting a zymogenic nature.

Its subcellular location is the cell membrane. The protein localises to the membrane. It carries out the reaction [(1-&gt;4)-N-acetyl-beta-D-glucosaminyl](n) + UDP-N-acetyl-alpha-D-glucosamine = [(1-&gt;4)-N-acetyl-beta-D-glucosaminyl](n+1) + UDP + H(+). In terms of biological role, polymerizes chitin, a structural polymer of the cell wall and septum, by transferring the sugar moiety of UDP-GlcNAc to the non-reducing end of the growing chitin polymer. CHS5 is required for the sustained growth at 37 degrees Celsius and is of critical importance for virulence. Especially important at infection temperatures for maintaining the cell wall integrity of developing yeast buds, elongating tips of hyphae, and random sites of expansion in sclerotic forms. The polypeptide is Chitin synthase 5 (Exophiala dermatitidis (strain ATCC 34100 / CBS 525.76 / NIH/UT8656) (Black yeast)).